The primary structure comprises 262 residues: MQVDLLSSAQSAHALHLFHQHSPLVHCMTNDVVQTFTANTLLVLGASPAMVIETEEASQFAAIASALLINVGTLTQLCAQSMCAAVEQAKSSQTPWTLDPVAVGALDYRRRFCLELLSHKPTAIRGNASEIMALAGIANGGRGVDTTDAAANAIPAAQTLARETGAIVVVTGEMDYVTDGHRIIGIHGGDPLMTKVVGTGCALSAVVAACCALPGDTLENVASACHWMKQAGERAVARSEGPGSFVPHFLDALWQLTQEVQA.

Residue Met-50 coordinates substrate. ATP is bound by residues Arg-125 and Thr-171. Position 198 (Gly-198) interacts with substrate.

Belongs to the Thz kinase family. Mg(2+) serves as cofactor.

The enzyme catalyses 5-(2-hydroxyethyl)-4-methylthiazole + ATP = 4-methyl-5-(2-phosphooxyethyl)-thiazole + ADP + H(+). Its pathway is cofactor biosynthesis; thiamine diphosphate biosynthesis; 4-methyl-5-(2-phosphoethyl)-thiazole from 5-(2-hydroxyethyl)-4-methylthiazole: step 1/1. Catalyzes the phosphorylation of the hydroxyl group of 4-methyl-5-beta-hydroxyethylthiazole (THZ). This chain is Hydroxyethylthiazole kinase, found in Escherichia coli O139:H28 (strain E24377A / ETEC).